The following is a 401-amino-acid chain: uncharacterized protein (401 aa).

A run of 10 helical transmembrane segments spans residues F20–Y40, I49–A69, I83–A100, Y104–I121, V140–M160, P167–L187, F207–Y227, M248–V268, L289–V309, and G357–L377.

This sequence belongs to the major facilitator superfamily.

The protein localises to the cell membrane. This is an uncharacterized protein from Bacillus subtilis (strain 168).